The sequence spans 371 residues: Carnitine monooxygenase oxygenase subunit (371 aa).

In terms of domain architecture, Rieske spans 44-152 (WICVAHGSEL…VEEYAGFVFI (109 aa)). C86, H88, C106, and H109 together coordinate [2Fe-2S] cluster. 3 residues coordinate Fe cation: H208, H213, and D323.

This sequence belongs to the bacterial ring-hydroxylating dioxygenase alpha subunit family. CntA subfamily. Composed of an oxygenase subunit and a reductase subunit. [2Fe-2S] cluster is required as a cofactor. The cofactor is Fe cation.

The enzyme catalyses (R)-carnitine + NADH + O2 + H(+) = (3R)-3-hydroxy-4-oxobutanoate + trimethylamine + NAD(+) + H2O. It catalyses the reaction (R)-carnitine + NADPH + O2 + H(+) = (3R)-3-hydroxy-4-oxobutanoate + trimethylamine + NADP(+) + H2O. The protein operates within amine and polyamine metabolism; carnitine metabolism. With respect to regulation, inhibited by EDTA. Converts carnitine to trimethylamine and malic semialdehyde. Acts on both enantiomers. The polypeptide is Carnitine monooxygenase oxygenase subunit (Acinetobacter pittii (strain PHEA-2)).